Reading from the N-terminus, the 163-residue chain is Protein-export protein SecB (163 aa).

It belongs to the SecB family. In terms of assembly, homotetramer, a dimer of dimers. One homotetramer interacts with 1 SecA dimer.

Its subcellular location is the cytoplasm. Its function is as follows. One of the proteins required for the normal export of preproteins out of the cell cytoplasm. It is a molecular chaperone that binds to a subset of precursor proteins, maintaining them in a translocation-competent state. It also specifically binds to its receptor SecA. This is Protein-export protein SecB from Brucella anthropi (strain ATCC 49188 / DSM 6882 / CCUG 24695 / JCM 21032 / LMG 3331 / NBRC 15819 / NCTC 12168 / Alc 37) (Ochrobactrum anthropi).